The sequence spans 141 residues: Nucleoside diphosphate kinase (141 aa).

ATP contacts are provided by K11, F59, R87, T93, R104, and N114.

It belongs to the NDK family. Homotetramer. It depends on Mg(2+) as a cofactor.

It localises to the cytoplasm. It catalyses the reaction a 2'-deoxyribonucleoside 5'-diphosphate + ATP = a 2'-deoxyribonucleoside 5'-triphosphate + ADP. The catalysed reaction is a ribonucleoside 5'-diphosphate + ATP = a ribonucleoside 5'-triphosphate + ADP. In terms of biological role, major role in the synthesis of nucleoside triphosphates other than ATP. The ATP gamma phosphate is transferred to the NDP beta phosphate via a ping-pong mechanism, using a phosphorylated active-site intermediate. The protein is Nucleoside diphosphate kinase of Saccharophagus degradans (strain 2-40 / ATCC 43961 / DSM 17024).